Here is a 344-residue protein sequence, read N- to C-terminus: N-acetyl-gamma-glutamyl-phosphate reductase (344 aa).

Cysteine 150 is a catalytic residue.

Belongs to the NAGSA dehydrogenase family. Type 1 subfamily.

The protein resides in the cytoplasm. It catalyses the reaction N-acetyl-L-glutamate 5-semialdehyde + phosphate + NADP(+) = N-acetyl-L-glutamyl 5-phosphate + NADPH + H(+). It participates in amino-acid biosynthesis; L-arginine biosynthesis; N(2)-acetyl-L-ornithine from L-glutamate: step 3/4. Functionally, catalyzes the NADPH-dependent reduction of N-acetyl-5-glutamyl phosphate to yield N-acetyl-L-glutamate 5-semialdehyde. This chain is N-acetyl-gamma-glutamyl-phosphate reductase, found in Azotobacter vinelandii (strain DJ / ATCC BAA-1303).